The sequence spans 373 residues: uncharacterized protein (373 aa).

The helical transmembrane segment at 180–202 (YYVVALGTLALGSILGYTAKYVW) threads the bilayer.

It localises to the membrane. This is an uncharacterized protein from Rickettsia prowazekii (strain Madrid E).